The sequence spans 255 residues: Snake venom serine protease HS112 (255 aa).

A signal peptide spans 1–18; sequence MVLIRVIANLLILQLSYA. The propeptide occupies 19 to 24; the sequence is QKSSEL. Positions 25–246 constitute a Peptidase S1 domain; sequence VIGGDECDIN…YLPWIQSIIA (222 aa). Intrachain disulfides connect cysteine 31–cysteine 162, cysteine 49–cysteine 65, cysteine 97–cysteine 253, cysteine 141–cysteine 207, cysteine 173–cysteine 186, and cysteine 197–cysteine 222. Catalysis depends on charge relay system residues histidine 64 and aspartate 109. The N-linked (GlcNAc...) asparagine glycan is linked to asparagine 169. Serine 201 functions as the Charge relay system in the catalytic mechanism. Asparagine 248 is a glycosylation site (N-linked (GlcNAc...) asparagine).

Belongs to the peptidase S1 family. Snake venom subfamily. As to quaternary structure, monomer. In terms of tissue distribution, expressed by the venom gland.

It localises to the secreted. Snake venom serine protease that may act in the hemostasis system of the prey. This chain is Snake venom serine protease HS112, found in Bothrops jararaca (Jararaca).